Reading from the N-terminus, the 504-residue chain is MEEFQVYLELNRSRRHDFLYPLIFREYIYALAHDHGLNKSMIFFENQGYGNKFSSLIVKRLIIRMDQQNHLIISANDSNQNPFFGHNNNLYSQMISAGFAVIVEIPFSLRLVSYSQGEEVAKSHNLQSIHSIFPFLEDKFSHLNYVLDVLIPHPIHLEILVQALRYWVKDASSLHLLRFSLYEYCNLKSFITPKKSISIFNPRLFLFLYNSHACEYESIFLFLRNQSSHLRSTSSGAFLERIYFYGKIEYLVEVFYNDFQNNLWLFKDPFIHFIRYQGKAILASKDTSLLMNKWKYYFVDLWQYYFYMWSQSGRVRINQLSKYSLDFLGYLSSVRLNPSVVRSQMLENSFIIDNAMKKLDTRIPIISLIGSLSKAKFCNTLGHPISKPTWADSSDSDIIDRFVRICRNLSHYHSGSSKKKSLYQIKYILRFSCVKTLARKHKSTVRAFLKRLGSEFLEEFFTETEEEHVFSLIFPRVFFTSRKLYRGRIWYLDIICINALVNHE.

Belongs to the intron maturase 2 family. MatK subfamily.

Its subcellular location is the plastid. It is found in the chloroplast. In terms of biological role, usually encoded in the trnK tRNA gene intron. Probably assists in splicing its own and other chloroplast group II introns. This is Maturase K from Ochroma pyramidale (Balsa).